The chain runs to 388 residues: 3-dehydroquinate synthase (388 aa).

NAD(+)-binding positions include 85–90 (DGEQYK), 119–123 (GVIGD), 143–144 (TT), Lys156, Lys165, and 183–186 (TLKT). 3 residues coordinate Zn(2+): Glu198, His261, and His278.

This sequence belongs to the sugar phosphate cyclases superfamily. Dehydroquinate synthase family. It depends on Co(2+) as a cofactor. The cofactor is Zn(2+). NAD(+) is required as a cofactor.

The protein resides in the cytoplasm. It catalyses the reaction 7-phospho-2-dehydro-3-deoxy-D-arabino-heptonate = 3-dehydroquinate + phosphate. It functions in the pathway metabolic intermediate biosynthesis; chorismate biosynthesis; chorismate from D-erythrose 4-phosphate and phosphoenolpyruvate: step 2/7. Functionally, catalyzes the conversion of 3-deoxy-D-arabino-heptulosonate 7-phosphate (DAHP) to dehydroquinate (DHQ). This chain is 3-dehydroquinate synthase, found in Psychrobacter arcticus (strain DSM 17307 / VKM B-2377 / 273-4).